A 405-amino-acid chain; its full sequence is Sialic acid transporter NanX (405 aa).

At 1-20 (MATAWYKQVNPPQRKALFSA) the chain is on the cytoplasmic side. The chain crosses the membrane as a helical span at residues 21–41 (WLGYVFDGFDFMMIFYILHII). Topologically, residues 42-53 (KADLGITDIQAT) are periplasmic. A helical transmembrane segment spans residues 54–74 (LIGTVAFIARPIGGGFFGAMA). Topologically, residues 75–80 (DKYGRK) are cytoplasmic. The chain crosses the membrane as a helical span at residues 81 to 101 (PMMMWAIFIYSVGTGLSGIAT). Residue Asn102 is a topological domain, periplasmic. A helical membrane pass occupies residues 103 to 123 (LYMLAVCRFIVGLGMSGEYAC). Residues 124-139 (ASTYAVESWPKNLQSK) lie on the Cytoplasmic side of the membrane. A helical membrane pass occupies residues 140-160 (ASAFLVSGFSVGNIIAAQIIP). Residues 161–164 (QFAE) are Periplasmic-facing. Residues 165 to 185 (VYGWRNSFFIGLLPVLLVLWI) traverse the membrane as a helical segment. Topologically, residues 186–214 (RKSAPESQEWIEDKYKDKSTFLSVFRKPH) are cytoplasmic. Residues 215–235 (LSISMIVFLVCFCLFGANWPI) traverse the membrane as a helical segment. The Periplasmic portion of the chain corresponds to 236 to 250 (NGLLPSYLADNGVNT). The helical transmembrane segment at 251–271 (VVISTLMTIAGLGTLTGTIFF) threads the bilayer. Residues 272–282 (GFVGDKIGVKK) lie on the Cytoplasmic side of the membrane. The chain crosses the membrane as a helical span at residues 283-303 (AFVVGLITSFIFLCPLFFISV). Residues 304-307 (KNSS) lie on the Periplasmic side of the membrane. The helical transmembrane segment at 308–328 (LIGLCLFGLMFTNLGIAGLVP) threads the bilayer. Topologically, residues 329–344 (KFIYDYFPTKLRGLGT) are cytoplasmic. A helical transmembrane segment spans residues 345–365 (GLIYNLGATGGMAAPVLATYI). Over 366–371 (SGYYGL) the chain is Periplasmic. The chain crosses the membrane as a helical span at residues 372–392 (GVSLFIVTVAFSALLILLVGF). Residues 393–405 (DIPGKIYKLSVAK) lie on the Cytoplasmic side of the membrane.

This sequence belongs to the major facilitator superfamily. Sugar transporter (TC 2.A.1.1) family.

The protein resides in the cell inner membrane. Its function is as follows. Probably transports across the inner membrane the two dehydrated forms of N-acetylneuraminate (Neu5Ac), 2,7-anhydro-N-acetylneuraminate (2,7-AN) and 2-deoxy-2,3-didehydro-N-acetylneuraminate (2,3-EN). In Escherichia coli (strain K12), this protein is Sialic acid transporter NanX.